The chain runs to 469 residues: Glutamate--tRNA ligase (469 aa).

Residues 9–19 (PSPTGFLHVGG) carry the 'HIGH' region motif. Residues Cys98, Cys100, Cys125, and Asp127 each contribute to the Zn(2+) site. The 'KMSKS' region motif lies at 236 to 240 (KLSKR). Lys239 contributes to the ATP binding site.

This sequence belongs to the class-I aminoacyl-tRNA synthetase family. Glutamate--tRNA ligase type 1 subfamily. As to quaternary structure, monomer. Requires Zn(2+) as cofactor.

The protein localises to the cytoplasm. The enzyme catalyses tRNA(Glu) + L-glutamate + ATP = L-glutamyl-tRNA(Glu) + AMP + diphosphate. In terms of biological role, catalyzes the attachment of glutamate to tRNA(Glu) in a two-step reaction: glutamate is first activated by ATP to form Glu-AMP and then transferred to the acceptor end of tRNA(Glu). This Shewanella sp. (strain MR-4) protein is Glutamate--tRNA ligase.